Here is a 402-residue protein sequence, read N- to C-terminus: Chorismate synthase (402 aa).

2 residues coordinate NADP(+): Arg-40 and Arg-46. FMN is bound by residues 134–136, 255–256, Gly-299, 314–318, and Arg-340; these read RAS, QA, and KPIAT.

The protein belongs to the chorismate synthase family. As to quaternary structure, homotetramer. It depends on FMNH2 as a cofactor.

It catalyses the reaction 5-O-(1-carboxyvinyl)-3-phosphoshikimate = chorismate + phosphate. Its pathway is metabolic intermediate biosynthesis; chorismate biosynthesis; chorismate from D-erythrose 4-phosphate and phosphoenolpyruvate: step 7/7. Functionally, catalyzes the anti-1,4-elimination of the C-3 phosphate and the C-6 proR hydrogen from 5-enolpyruvylshikimate-3-phosphate (EPSP) to yield chorismate, which is the branch point compound that serves as the starting substrate for the three terminal pathways of aromatic amino acid biosynthesis. This reaction introduces a second double bond into the aromatic ring system. This is Chorismate synthase from Leifsonia xyli subsp. xyli (strain CTCB07).